The chain runs to 209 residues: Ribosomal RNA large subunit methyltransferase E (209 aa).

S-adenosyl-L-methionine-binding residues include Gly63, Trp65, Asp83, Asp99, and Asp124. Lys164 functions as the Proton acceptor in the catalytic mechanism.

Belongs to the class I-like SAM-binding methyltransferase superfamily. RNA methyltransferase RlmE family.

It localises to the cytoplasm. It carries out the reaction uridine(2552) in 23S rRNA + S-adenosyl-L-methionine = 2'-O-methyluridine(2552) in 23S rRNA + S-adenosyl-L-homocysteine + H(+). Specifically methylates the uridine in position 2552 of 23S rRNA at the 2'-O position of the ribose in the fully assembled 50S ribosomal subunit. In Vibrio atlanticus (strain LGP32) (Vibrio splendidus (strain Mel32)), this protein is Ribosomal RNA large subunit methyltransferase E.